The chain runs to 468 residues: Trehalose-2-sulfate acyltransferase PapA2 (468 aa).

It belongs to the PapA acyltransferase family.

The catalysed reaction is 2-O-sulfo-alpha,alpha-trehalose + hexadecanoyl-CoA = 2-O-sulfo-2'-O-hexadecanoyl-alpha,alpha-trehalose + CoA. Its function is as follows. Catalyzes the acylation of trehalose-2-sulfate by adding the palmitoyl group at the 2'-position to yield the intermediate trehalose-2-sulfate-2'-palmitate (SL659). In Mycobacterium tuberculosis (strain ATCC 25177 / H37Ra), this protein is Trehalose-2-sulfate acyltransferase PapA2 (papA2).